A 671-amino-acid polypeptide reads, in one-letter code: Kinesin-like protein KIF2C (671 aa).

Positions 1–200 (MIDIDDVAAI…CNPLTVTDPI (200 aa)) are globular. The segment at 37–58 (QKRKSVNSKIPGPKEGLRSRST) is disordered. Residue S41 is modified to Phosphoserine; by AURKB. A Microtubule tip localization signal motif is present at residues 44–47 (SKIP). S55, S57, S61, S112, S121, S133, and S138 each carry phosphoserine. A disordered region spans residues 115–138 (AEEQAHSTRSTSSANPGNSVRRKS). Over residues 121–132 (STRSTSSANPGN) the composition is skewed to polar residues. Residues 153–184 (EKRAQNSEIRIKRAQEYDNSFPNWEFARMIKE) are negative regulator of microtubule-binding. Residues 204 to 534 (RICVCVRKRP…LRYADRVKEL (331 aa)) enclose the Kinesin motor domain. ATP-binding positions include R210 and 294–301 (GQTGSGKT). Position 465 is a phosphoserine (S465). The segment at 533–568 (ELSPHSGPSGEQAVQMETEEMDASSHGASLTGNEEE) is disordered. A coiled-coil region spans residues 566-601 (EEEELSSQMSSFNEAMTQIRELEERAMEELREIIQQ). S576 carries the phosphoserine modification.

The protein belongs to the TRAFAC class myosin-kinesin ATPase superfamily. Kinesin family. MCAK/KIF2 subfamily. As to quaternary structure, interacts with CENPH. Interacts with MTUS2/TIP150; the interaction is direct. Interacts with MAPRE1; the interaction is direct, regulated by phosphorylation and is probably required for targeting to growing microtubule plus ends. Interacts with KIF18B at microtubule tips; this interaction increases the affinity of both partners for microtubule plus ends and is required for robust microtubule depolymerization. Phosphorylation by AURKA or AURKB strongly reduces KIF18B-binding. Phosphorylation by AURKB, regulates association with centromeres and kinetochores and the microtubule depolymerization activity. In terms of processing, ubiquitinated. In terms of tissue distribution, testis. Localized to the meiotically active cells of the seminiferous epithelia in the testis.

The protein localises to the cytoplasm. It is found in the cytoskeleton. Its subcellular location is the nucleus. The protein resides in the chromosome. It localises to the centromere. The protein localises to the kinetochore. Its function is as follows. In complex with KIF18B, constitutes the major microtubule plus-end depolymerizing activity in mitotic cells. Regulates the turnover of microtubules at the kinetochore and functions in chromosome segregation during mitosis. Plays a role in chromosome congression and is required for the lateral to end-on conversion of the chromosome-microtubule attachment. This chain is Kinesin-like protein KIF2C (Kif2c), found in Rattus norvegicus (Rat).